The chain runs to 524 residues: Zinc finger CCCH-type with G patch domain-containing protein (524 aa).

Positions 105–142 (SEESQPLGSNDETSTCSKGSEEEEEEEEEEEDNTSGMK) are disordered. The segment covering 106 to 122 (EESQPLGSNDETSTCSK) has biased composition (polar residues). A compositionally biased stretch (acidic residues) spans 125–137 (EEEEEEEEEEEDN). The C3H1-type zinc finger occupies 184–210 (KAMKPCPFFLDGKCLFNDNCRFSHGQV). Residues 279-298 (RGSDSSSSSSSDEEEDGAAE) are disordered. Residues 326-372 (TRGIGSKLLVRMGYEFGKGLGRNAEGRVEPIQAVVLPKGKSLDQCME) enclose the G-patch domain. Disordered regions lie at residues 375-402 (QRKK…GGAK) and 500-524 (GLQQ…MTEF). The segment covering 376-393 (RKKAGGKHKHKTSKRRPK) has biased composition (basic residues).

It localises to the nucleus. Functionally, transcription repressor that specifically binds the 5'-GGAG[GA]A[GA]A-3' consensus sequence. Represses transcription by recruiting the chromatin multiprotein complex NuRD to target promoters. Negatively regulates expression of EGFR, a gene involved in cell proliferation, survival and migration. This Xenopus laevis (African clawed frog) protein is Zinc finger CCCH-type with G patch domain-containing protein (zgpat).